The chain runs to 974 residues: ATP-dependent RNA helicase glh-2 (974 aa).

A disordered region spans residues 212–435; the sequence is HESGFGGGKS…SGFGGGNDGG (224 aa). The span at 215-250 shows a compositional bias: gly residues; that stretch reads GFGGGKSGGFGGGNSGGSGFGSGGNSNGFGSGGGGQ. Residues 256-267 show a composition bias toward polar residues; the sequence is NNNCFNCQQPGH. 2 CCHC-type zinc fingers span residues 257–274 and 282–299; these read NNCF…DCPE and RVCY…DCPE. Basic and acidic residues-rich tracts occupy residues 268-282 and 293-307; these read RSND…REPR and NSRD…REGR. Residues 309–364 are compositionally biased toward gly residues; sequence GFTGGSSGFGGGNGGGTGFDSGLTNGFGSGNNGESGFGSGGFGGNSNGFGSGGGGQ. Over residues 370 to 381 the composition is skewed to polar residues; the sequence is NNNCFNCQQPGH. 2 consecutive CCHC-type zinc fingers follow at residues 371 to 388 and 396 to 413; these read NNCF…DCPE and RVCY…DCPE. Basic and acidic residues-rich tracts occupy residues 382-396 and 407-421; these read RSND…REPR and NSRD…REGR. The span at 426 to 435 shows a compositional bias: gly residues; that stretch reads SGFGGGNDGG. CCHC-type zinc fingers lie at residues 453–470 and 473–490; these read MKCF…ECPE and RGCF…ECPN. The short motif at 552–580 is the Q motif element; that stretch reads KTFSEANLGETMKKNVAHAGYTKTTPIQQ. The Helicase ATP-binding domain maps to 583–767; the sequence is LPLIHQGHDI…RNHLKEGYIM (185 aa). 596-603 contributes to the ATP binding site; it reads AQTGSGKT. Residues 710–713 carry the DEAD box motif; sequence DEAD. A Helicase C-terminal domain is found at 803-950; it reads DIDSYTTEKN…LVPEWMQGAS (148 aa).

The protein belongs to the DEAD box helicase family. DDX4/VASA subfamily. As to quaternary structure, interacts (via C-terminus) with kgb-1.

The enzyme catalyses ATP + H2O = ADP + phosphate + H(+). Its function is as follows. Probable ATP-binding RNA helicase. The protein is ATP-dependent RNA helicase glh-2 (glh-2) of Caenorhabditis elegans.